We begin with the raw amino-acid sequence, 116 residues long: Ribosome-binding factor A (116 aa).

This sequence belongs to the RbfA family. As to quaternary structure, monomer. Binds 30S ribosomal subunits, but not 50S ribosomal subunits or 70S ribosomes.

It localises to the cytoplasm. In terms of biological role, one of several proteins that assist in the late maturation steps of the functional core of the 30S ribosomal subunit. Associates with free 30S ribosomal subunits (but not with 30S subunits that are part of 70S ribosomes or polysomes). Required for efficient processing of 16S rRNA. May interact with the 5'-terminal helix region of 16S rRNA. This chain is Ribosome-binding factor A, found in Streptococcus pyogenes serotype M28 (strain MGAS6180).